The primary structure comprises 247 residues: tRNA uridine(34) hydroxylase (247 aa).

Positions 123–217 (ITKQDVIVDT…YLEDTQNKNN (95 aa)) constitute a Rhodanese domain. The Cysteine persulfide intermediate role is filled by cysteine 177.

It belongs to the TrhO family.

The enzyme catalyses uridine(34) in tRNA + AH2 + O2 = 5-hydroxyuridine(34) in tRNA + A + H2O. In terms of biological role, catalyzes oxygen-dependent 5-hydroxyuridine (ho5U) modification at position 34 in tRNAs. The sequence is that of tRNA uridine(34) hydroxylase from Rickettsia bellii (strain RML369-C).